The following is a 791-amino-acid chain: MARKNSSLNGSESAELVVKKRVLEESELSDSEDERIEVDGLIDEEASENEAEEAEDDDSDAEFNRLLAEEENGQEEEYNTSDFSEEGDAFSITDKLSNVKLTVIPETSDEGIVRTKYSDGRPRILKSEINPVYDSDDSDAEAKNTIGNIPLSAYDEMPHIGYDINGKRIMRPAKGSALDQLLESIELPEGWTGLLDKDSGASLNLTEEELELINKLQNNQQTDESVNPYEPLIDWFTRHESVMPVTAVPEPKRRFVPSKHEAKRVMKIVKAIREGRIIPPKKLKELREKEEQDSHNYDLWGDAEEISEHVMNLRAPKLPPPTNEESYNPPEEYLLTPEEIDAWEKMEPSERERNFVPHKFAALRKVPGYSESVRERFERSLDLYLAPRVRKNKLNIDPESLIPELPSTKDLRPFPIRCSTVYVGHKGKIRTMSIDPTGLWLATGSDDGTVRVWEILTGREVYQVTILNAEENNDDHIDVVEWNPDSTTGILAVTAGENIFLLVPPIFGFEIENTGKSKIEYGFGFDTFGNVKKSNLNVNSDDEDDGAESHAVKKQVAQWNKPTERQAANDICIVITCRKSVKKLSWHRKGDYFVTVQPDSGNTSVLIHQLSKHLTQSPFKKSKGIIMDAKFHPFKPQLLVCSQRYVRIYDLSQQVLIKKLLPGARWLSTIDIHPRGDNLIASSFDKRVLWHDLDLASTPYKTLRYHEKAVRSVSFHKKLPLFCSAADDGNIHVFHATVYDDLMKNPMIVPLKKLTGHKIVNSLGVLDTIWHPREAWLFSAGADKTARLWTT.

A compositionally biased stretch (polar residues) spans 1 to 12; that stretch reads MARKNSSLNGSE. 2 disordered regions span residues 1–60 and 68–87; these read MARK…DDSD and AEEE…SEEG. Acidic residues-rich tracts occupy residues 25 to 60 and 69 to 87; these read ESEL…DDSD and EEEN…SEEG. The tract at residues 254-372 is required for interaction with NOP7; the sequence is RFVPSKHEAK…LRKVPGYSES (119 aa). Residues 372-408 are required for interaction with YTM1; that stretch reads SVRERFERSLDLYLAPRVRKNKLNIDPESLIPELPST. 7 WD repeats span residues 424–463, 472–512, 576–618, 621–659, 662–701, 705–744, and 760–791; these read GHKG…EVYQ, NNDD…FEIE, TCRK…TQSP, KSKG…LIKK, PGAR…TPYK, YHEK…DLMK, and VNSL…LWTT.

The protein belongs to the WD repeat BOP1/ERB1 family. As to quaternary structure, component of the NOP7 complex, composed of ERB1, NOP7 and YTM1. The complex is held together by ERB1, which interacts with NOP7 via its N-terminal domain and with YTM1 via a high-affinity interaction between the seven-bladed beta-propeller domains of the 2 proteins. The NOP7 complex associates with the 66S pre-ribosome.

The protein localises to the nucleus. It localises to the nucleolus. Its subcellular location is the nucleoplasm. Component of the NOP7 complex, which is required for maturation of the 25S and 5.8S ribosomal RNAs and formation of the 60S ribosome. The chain is Ribosome biogenesis protein ERB1 from Kluyveromyces lactis (strain ATCC 8585 / CBS 2359 / DSM 70799 / NBRC 1267 / NRRL Y-1140 / WM37) (Yeast).